Reading from the N-terminus, the 132-residue chain is Glycine cleavage system H protein (132 aa).

The Lipoyl-binding domain maps to 24 to 106 (IATIGLSAHA…YEEGWFIKVR (83 aa)). K65 is subject to N6-lipoyllysine.

This sequence belongs to the GcvH family. As to quaternary structure, the glycine cleavage system is composed of four proteins: P, T, L and H. The cofactor is (R)-lipoate.

In terms of biological role, the glycine cleavage system catalyzes the degradation of glycine. The H protein shuttles the methylamine group of glycine from the P protein to the T protein. The chain is Glycine cleavage system H protein from Picosynechococcus sp. (strain ATCC 27264 / PCC 7002 / PR-6) (Agmenellum quadruplicatum).